The sequence spans 225 residues: Peptidyl-tRNA hydrolase (225 aa).

Tyr14 is a tRNA binding site. His19 (proton acceptor) is an active-site residue. Residues Phe64, Asn66, and Asn112 each contribute to the tRNA site. A disordered region spans residues 182–225; sequence AVALRMQPPKPEKPKPAAKAPEAQAPEAAPDERSALQKLADRFR. The segment covering 198–209 has biased composition (low complexity); sequence AAKAPEAQAPEA. Positions 211–225 are enriched in basic and acidic residues; that stretch reads PDERSALQKLADRFR.

The protein belongs to the PTH family. As to quaternary structure, monomer.

The protein resides in the cytoplasm. The enzyme catalyses an N-acyl-L-alpha-aminoacyl-tRNA + H2O = an N-acyl-L-amino acid + a tRNA + H(+). Hydrolyzes ribosome-free peptidyl-tRNAs (with 1 or more amino acids incorporated), which drop off the ribosome during protein synthesis, or as a result of ribosome stalling. Functionally, catalyzes the release of premature peptidyl moieties from peptidyl-tRNA molecules trapped in stalled 50S ribosomal subunits, and thus maintains levels of free tRNAs and 50S ribosomes. This Cereibacter sphaeroides (strain ATCC 17029 / ATH 2.4.9) (Rhodobacter sphaeroides) protein is Peptidyl-tRNA hydrolase.